We begin with the raw amino-acid sequence, 272 residues long: tRNA pseudouridine synthase A (272 aa).

Residue D52 is the Nucleophile of the active site. Y110 contributes to the substrate binding site.

This sequence belongs to the tRNA pseudouridine synthase TruA family. In terms of assembly, homodimer.

It catalyses the reaction uridine(38/39/40) in tRNA = pseudouridine(38/39/40) in tRNA. Functionally, formation of pseudouridine at positions 38, 39 and 40 in the anticodon stem and loop of transfer RNAs. The polypeptide is tRNA pseudouridine synthase A (Cupriavidus taiwanensis (strain DSM 17343 / BCRC 17206 / CCUG 44338 / CIP 107171 / LMG 19424 / R1) (Ralstonia taiwanensis (strain LMG 19424))).